A 113-amino-acid polypeptide reads, in one-letter code: Iron-sulfur cluster insertion protein ErpA (113 aa).

Iron-sulfur cluster contacts are provided by Cys41, Cys105, and Cys107.

Belongs to the HesB/IscA family. As to quaternary structure, homodimer. Iron-sulfur cluster serves as cofactor.

Functionally, required for insertion of 4Fe-4S clusters for at least IspG. This Actinobacillus succinogenes (strain ATCC 55618 / DSM 22257 / CCUG 43843 / 130Z) protein is Iron-sulfur cluster insertion protein ErpA.